The sequence spans 243 residues: uncharacterized protein (243 aa).

Residues 1–18 (MSNSHYNNYQQQQPHSSN) show a composition bias toward low complexity. The disordered stretch occupies residues 1–30 (MSNSHYNNYQQQQPHSSNGDPEYQHQQMVH). The AMMECR1 domain maps to 38–232 (GHGMKTVAVP…MHYKEYREYQ (195 aa)).

This is an uncharacterized protein from Drosophila melanogaster (Fruit fly).